The sequence spans 610 residues: DNA mismatch repair protein MutL (610 aa).

This sequence belongs to the DNA mismatch repair MutL/HexB family.

Functionally, this protein is involved in the repair of mismatches in DNA. It is required for dam-dependent methyl-directed DNA mismatch repair. May act as a 'molecular matchmaker', a protein that promotes the formation of a stable complex between two or more DNA-binding proteins in an ATP-dependent manner without itself being part of a final effector complex. This Rickettsia rickettsii (strain Sheila Smith) protein is DNA mismatch repair protein MutL.